Here is a 452-residue protein sequence, read N- to C-terminus: Exodeoxyribonuclease 7 large subunit (452 aa).

It belongs to the XseA family. As to quaternary structure, heterooligomer composed of large and small subunits.

Its subcellular location is the cytoplasm. The enzyme catalyses Exonucleolytic cleavage in either 5'- to 3'- or 3'- to 5'-direction to yield nucleoside 5'-phosphates.. Bidirectionally degrades single-stranded DNA into large acid-insoluble oligonucleotides, which are then degraded further into small acid-soluble oligonucleotides. This chain is Exodeoxyribonuclease 7 large subunit, found in Bacillus cereus (strain ATCC 10987 / NRS 248).